Reading from the N-terminus, the 329-residue chain is Malate dehydrogenase (329 aa).

12-18 contacts NAD(+); that stretch reads GAAGQIG. The substrate site is built by Arg-95 and Arg-101. Residues Asn-108, Gln-115, and 132-134 each bind NAD(+); that span reads VGN. Substrate-binding residues include Asn-134 and Arg-165. His-190 (proton acceptor) is an active-site residue.

Belongs to the LDH/MDH superfamily. MDH type 2 family.

The catalysed reaction is (S)-malate + NAD(+) = oxaloacetate + NADH + H(+). In terms of biological role, catalyzes the reversible oxidation of malate to oxaloacetate. In Herminiimonas arsenicoxydans, this protein is Malate dehydrogenase.